The chain runs to 341 residues: 1-aminocyclopropane-1-carboxylate deaminase (341 aa).

Serine 1 is modified (N-acetylserine). N6-(pyridoxal phosphate)lysine is present on lysine 51. Catalysis depends on serine 78, which acts as the Nucleophile.

The protein belongs to the ACC deaminase/D-cysteine desulfhydrase family. In terms of assembly, homodimer. It depends on pyridoxal 5'-phosphate as a cofactor.

The catalysed reaction is 1-aminocyclopropane-1-carboxylate + H2O = 2-oxobutanoate + NH4(+). Its function is as follows. Catalyzes a cyclopropane ring-opening reaction, the irreversible conversion of 1-aminocyclopropane-1-carboxylate (ACC) to ammonia and alpha-ketobutyrate. In Cyberlindnera saturnus (Yeast), this protein is 1-aminocyclopropane-1-carboxylate deaminase.